The chain runs to 247 residues: MSKLFWAMLAFISRLPVPSRWSQGLDFEQYSRGIVMFPFIGLILGGISGLIFILLQPWCGIPLAALFCILALALLTGGFHLDGLADTCDGIFSARRRERMLEIMRDSRLGTHGGLALIFVLLAKILVVSELALRGTPMLAALAAACAAGRGSAVLLMYRHRYAREEGLGNVFIGKVSGRQTCITLGLAVIVATVLLLGMQGLATMVVTLAAIFILGQLLKRTLGGQTGDTLGAAIELGELIFLLALL.

A run of 5 helical transmembrane segments spans residues 34 to 54 (IVMFPFIGLILGGISGLIFIL), 59 to 79 (CGIPLAALFCILALALLTGGF), 113 to 133 (GGLALIFVLLAKILVVSELAL), 138 to 158 (MLAALAAACAAGRGSAVLLMY), and 194 to 214 (VLLLGMQGLATMVVTLAAIFI).

It belongs to the CobS family. Mg(2+) is required as a cofactor.

It is found in the cell inner membrane. The enzyme catalyses alpha-ribazole + adenosylcob(III)inamide-GDP = adenosylcob(III)alamin + GMP + H(+). The catalysed reaction is alpha-ribazole 5'-phosphate + adenosylcob(III)inamide-GDP = adenosylcob(III)alamin 5'-phosphate + GMP + H(+). Its pathway is cofactor biosynthesis; adenosylcobalamin biosynthesis; adenosylcobalamin from cob(II)yrinate a,c-diamide: step 7/7. Its function is as follows. Joins adenosylcobinamide-GDP and alpha-ribazole to generate adenosylcobalamin (Ado-cobalamin). Also synthesizes adenosylcobalamin 5'-phosphate from adenosylcobinamide-GDP and alpha-ribazole 5'-phosphate. The protein is Adenosylcobinamide-GDP ribazoletransferase of Salmonella typhi.